The chain runs to 357 residues: tRNA-specific 2-thiouridylase MnmA (357 aa).

ATP contacts are provided by residues 11 to 18 and Leu-37; that span reads AMSGGVDS. Cys-102 acts as the Nucleophile in catalysis. The cysteines at positions 102 and 197 are disulfide-linked. An ATP-binding site is contributed by Gly-126. The segment at 148 to 150 is interaction with tRNA; that stretch reads KDQ. Residue Cys-197 is the Cysteine persulfide intermediate of the active site. The interval 301-302 is interaction with tRNA; the sequence is RY.

It belongs to the MnmA/TRMU family.

It is found in the cytoplasm. The catalysed reaction is S-sulfanyl-L-cysteinyl-[protein] + uridine(34) in tRNA + AH2 + ATP = 2-thiouridine(34) in tRNA + L-cysteinyl-[protein] + A + AMP + diphosphate + H(+). In terms of biological role, catalyzes the 2-thiolation of uridine at the wobble position (U34) of tRNA, leading to the formation of s(2)U34. This Dehalococcoides mccartyi (strain ATCC BAA-2266 / KCTC 15142 / 195) (Dehalococcoides ethenogenes (strain 195)) protein is tRNA-specific 2-thiouridylase MnmA.